A 597-amino-acid polypeptide reads, in one-letter code: Cytosolic phospholipase A2 gamma (597 aa).

In terms of domain architecture, PLA2c spans M1–D597. S83 acts as the Nucleophile in catalysis. D417 acts as the Proton acceptor in catalysis. The interval R576–D597 is disordered. Basic and acidic residues predominate over residues E587–D597.

Highly expressed in ovary, where it localizes to oocytes in preantral and antral stage follicles (at protein level). Not detected in other tissues tested.

It localises to the nucleus. The protein resides in the nucleoplasm. Its subcellular location is the nucleus envelope. The protein localises to the cytoplasm. It is found in the cell cortex. It localises to the cytoskeleton. The protein resides in the spindle. It carries out the reaction a 1,2-diacyl-sn-glycero-3-phosphocholine + H2O = a 1-acyl-sn-glycero-3-phosphocholine + a fatty acid + H(+). It catalyses the reaction a 1-O-alkyl-2-acyl-sn-glycero-3-phosphocholine + H2O = a 1-O-alkyl-sn-glycero-3-phosphocholine + a fatty acid + H(+). The enzyme catalyses 1,2-dihexadecanoyl-sn-glycero-3-phosphocholine + H2O = 1-hexadecanoyl-sn-glycero-3-phosphocholine + hexadecanoate + H(+). The catalysed reaction is 1-hexadecanoyl-2-(9Z-octadecenoyl)-sn-glycero-3-phosphocholine + H2O = 1-hexadecanoyl-sn-glycero-3-phosphocholine + (9Z)-octadecenoate + H(+). It carries out the reaction 1-hexadecanoyl-2-(9Z,12Z-octadecadienoyl)-sn-glycero-3-phosphocholine + H2O = (9Z,12Z)-octadecadienoate + 1-hexadecanoyl-sn-glycero-3-phosphocholine + H(+). It catalyses the reaction 1-hexadecanoyl-2-(5Z,8Z,11Z,14Z-eicosatetraenoyl)-sn-glycero-3-phosphocholine + H2O = 1-hexadecanoyl-sn-glycero-3-phosphocholine + (5Z,8Z,11Z,14Z)-eicosatetraenoate + H(+). The enzyme catalyses 1-O-hexadecyl-2-(5Z,8Z,11Z,14Z)-eicosatetraenoyl-sn-glycero-3-phosphocholine + H2O = 1-O-hexadecyl-sn-glycero-3-phosphocholine + (5Z,8Z,11Z,14Z)-eicosatetraenoate + H(+). The catalysed reaction is 1-hexadecanoyl-2-(5Z,8Z,11Z,14Z-eicosatetraenoyl)-sn-glycero-3-phosphocholine + H2O = 2-(5Z,8Z,11Z,14Z)-eicosatetraenoyl-sn-glycero-3-phosphocholine + hexadecanoate + H(+). It carries out the reaction a 1-acyl-sn-glycero-3-phosphocholine + H2O = sn-glycerol 3-phosphocholine + a fatty acid + H(+). It catalyses the reaction 1-hexadecanoyl-sn-glycero-3-phosphocholine + H2O = sn-glycerol 3-phosphocholine + hexadecanoate + H(+). The enzyme catalyses 2 1-hexadecanoyl-sn-glycero-3-phosphocholine = 1,2-dihexadecanoyl-sn-glycero-3-phosphocholine + sn-glycerol 3-phosphocholine. The catalysed reaction is 1-hexadecanoyl-sn-glycero-3-phosphoethanolamine + 1-hexadecanoyl-sn-glycero-3-phosphocholine = 1,2-dihexadecanoyl-sn-glycero-3-phosphoethanolamine + sn-glycerol 3-phosphocholine. It carries out the reaction 1-hexadecanoyl-sn-glycero-3-phosphoethanolamine + 1-hexadecanoyl-sn-glycero-3-phosphocholine = sn-glycero-3-phosphoethanolamine + 1,2-dihexadecanoyl-sn-glycero-3-phosphocholine. It catalyses the reaction 2 1-hexadecanoyl-sn-glycero-3-phosphoethanolamine = 1,2-dihexadecanoyl-sn-glycero-3-phosphoethanolamine + sn-glycero-3-phosphoethanolamine. The enzyme catalyses 1-O-hexadecyl-sn-glycero-3-phosphocholine + 1-hexadecanoyl-sn-glycero-3-phosphocholine = 1-O-hexadecyl-2-hexadecanoyl-sn-glycero-3-phosphocholine + sn-glycerol 3-phosphocholine. The catalysed reaction is a 1-O-(1Z-alkenyl)-sn-glycero-3-phosphoethanolamine + 1-hexadecanoyl-sn-glycero-3-phosphocholine = 1-O-(1Z)-alkenyl-2-hexadecanoyl-sn-glycero-3-phosphoethanolamine + sn-glycerol 3-phosphocholine. It carries out the reaction 1-O-hexadecyl-sn-glycero-3-phosphocholine + 1-hexadecanoyl-sn-glycero-3-phosphoethanolamine = 1-O-hexadecyl-2-hexadecanoyl-sn-glycero-3-phosphocholine + sn-glycero-3-phosphoethanolamine. It catalyses the reaction 1-octadecanoyl-2-(5Z,8Z,11Z,14Z)-eicosatetraenoyl-sn-glycero-3-phosphoethanolamine + 1-hexadecanoyl-sn-glycero-3-phosphocholine = 1-octadecanoyl-sn-glycero-3-phosphoethanolamine + 1-hexadecanoyl-2-(5Z,8Z,11Z,14Z-eicosatetraenoyl)-sn-glycero-3-phosphocholine. The enzyme catalyses 1-octadecanoyl-2-(5Z,8Z,11Z,14Z)-eicosatetraenoyl-sn-glycero-3-phosphoethanolamine + 1-O-hexadecyl-sn-glycero-3-phosphocholine = 1-octadecanoyl-sn-glycero-3-phosphoethanolamine + 1-O-hexadecyl-2-(5Z,8Z,11Z,14Z)-eicosatetraenoyl-sn-glycero-3-phosphocholine. The catalysed reaction is 1-hexadecanoyl-2-(9Z,12Z-octadecadienoyl)-sn-glycero-3-phosphocholine + a 1-O-(1Z-alkenyl)-sn-glycero-3-phosphoethanolamine = 1-O-(1Z-alkenyl)-2-(9Z,12Z-octadecadienoyl)-sn-glycero-3-phosphoethanolamine + 1-hexadecanoyl-sn-glycero-3-phosphocholine. It carries out the reaction 1-hexadecanoyl-2-(5Z,8Z,11Z,14Z-eicosatetraenoyl)-sn-glycero-3-phosphocholine + a 1-O-(1Z-alkenyl)-sn-glycero-3-phosphoethanolamine = 1-O-(1Z)-alkenyl-2-(5Z,8Z,11Z,14Z)-eicosatetraenoyl-sn-glycero-3-phosphoethanolamine + 1-hexadecanoyl-sn-glycero-3-phosphocholine. In terms of biological role, calcium-independent phospholipase, lysophospholipase and O-acyltransferase involved in phospholipid remodeling. Preferentially hydrolyzes the ester bond of the fatty acyl group attached at sn-2 position of phospholipids with choline and ethanolamine head groups, producing lysophospholipids that are used in deacylation-reacylation cycles. Transfers the sn-1 fatty acyl from one lysophospholipid molecule to the sn-2 position of another lysophospholipid to form diacyl, alkylacyl and alkenylacyl glycerophospholipids. Cleaves ester bonds but not alkyl or alkenyl ether bonds at the sn-1 position of lysophospholipids. Catalyzes sn-2 fatty acyl transfer from phospholipids to the sn-2 position of 1-O-alkyl or 1-O-alkenyl lysophospholipids with lower efficiency. This is Cytosolic phospholipase A2 gamma from Mus musculus (Mouse).